Reading from the N-terminus, the 329-residue chain is Beta-tectorin (329 aa).

Residues 1–17 form the signal peptide; sequence MVVRAFVLLALFAEASA. A ZP domain is found at 19-283; sequence SCTPNKADVI…LSCPVNCDKR (265 aa). N-linked (GlcNAc...) asparagine glycans are attached at residues N80, N104, N116, and N145. C204 and C264 are disulfide-bonded. A305 is lipidated: GPI-anchor amidated alanine. The propeptide at 306–329 is removed in mature form; the sequence is FSGLCDFSDVLLHLILMLGTWAVL.

May form homomeric filament after self-association or heteromeric filament after association with alpha-tectorin. Interacts with CEACAM16. Post-translationally, the presence of a hydrophobic C-terminus preceded by a potential cleavage site strongly suggests that tectorins are synthesized as glycosylphosphatidylinositol-linked, membrane-bound precursors. Tectorins are targeted to the apical surface of the inner ear epithelia by the lipid and proteolytically released into the extracellular compartment.

It is found in the cell membrane. The protein localises to the secreted. Its subcellular location is the extracellular space. The protein resides in the extracellular matrix. Functionally, one of the major non-collagenous components of the tectorial membrane. The tectorial membrane is an extracellular matrix of the inner ear that covers the neuroepithelium of the cochlea and contacts the stereocilia bundles of specialized sensory hair cells. Sound induces movement of these hair cells relative to the tectorial membrane, deflects the stereocilia and leads to fluctuations in hair-cell membrane potential, transducing sound into electrical signals. This chain is Beta-tectorin (Tectb), found in Mus musculus (Mouse).